The chain runs to 56 residues: MYVTKKIGKEFIYESCLRSYLLGFPKKIFHLSNFSRDCERNGKRRRHFSERRLENK.

This is an uncharacterized protein from Saccharomyces cerevisiae (strain ATCC 204508 / S288c) (Baker's yeast).